Consider the following 56-residue polypeptide: UPF0339 protein NMA1193/NMA1859 (56 aa).

This sequence belongs to the UPF0339 family.

The chain is UPF0339 protein NMA1193/NMA1859 from Neisseria meningitidis serogroup A / serotype 4A (strain DSM 15465 / Z2491).